A 133-amino-acid chain; its full sequence is ATP synthase epsilon chain, chloroplastic (133 aa).

Belongs to the ATPase epsilon chain family. F-type ATPases have 2 components, CF(1) - the catalytic core - and CF(0) - the membrane proton channel. CF(1) has five subunits: alpha(3), beta(3), gamma(1), delta(1), epsilon(1). CF(0) has three main subunits: a, b and c.

The protein localises to the plastid. Its subcellular location is the chloroplast thylakoid membrane. Produces ATP from ADP in the presence of a proton gradient across the membrane. The chain is ATP synthase epsilon chain, chloroplastic from Ipomoea batatas (Sweet potato).